The sequence spans 39 residues: uncharacterized protein (39 aa).

This is an uncharacterized protein from Dictyostelium discoideum (Social amoeba).